Reading from the N-terminus, the 450-residue chain is Serine/threonine-protein kinase-transforming protein Rmil (450 aa).

Composition is skewed to basic and acidic residues over residues 1–14 (MEAV…DQGV) and 49–73 (QRER…RDSS). The tract at residues 1–80 (MEAVIKDLIR…DSSDDWEIPD (80 aa)) is disordered. Residues 83 to 343 (ITVGQRIGSG…PQILASIELL (261 aa)) form the Protein kinase domain. ATP contacts are provided by residues 89–97 (IGSGSFGTV) and lysine 109. Residue aspartate 202 is the Proton acceptor of the active site.

It belongs to the protein kinase superfamily. TKL Ser/Thr protein kinase family. RAF subfamily.

It catalyses the reaction L-seryl-[protein] + ATP = O-phospho-L-seryl-[protein] + ADP + H(+). The enzyme catalyses L-threonyl-[protein] + ATP = O-phospho-L-threonyl-[protein] + ADP + H(+). The polypeptide is Serine/threonine-protein kinase-transforming protein Rmil (V-RMIL) (Avian rous-associated virus type 1).